The chain runs to 432 residues: Adenylosuccinate synthetase (432 aa).

GTP-binding positions include 12 to 18 and 40 to 42; these read GDEGKGK and GHT. The active-site Proton acceptor is D13. The Mg(2+) site is built by D13 and G40. IMP-binding positions include 13–16, 38–41, T130, R144, Q225, T240, and R304; these read DEGK and NAGH. Residue H41 is the Proton donor of the active site. 300-306 is a substrate binding site; the sequence is ATTGRPR. Residues R306, 332–334, and 414–416 each bind GTP; these read KLD and SVG.

This sequence belongs to the adenylosuccinate synthetase family. In terms of assembly, homodimer. Requires Mg(2+) as cofactor.

It is found in the cytoplasm. The enzyme catalyses IMP + L-aspartate + GTP = N(6)-(1,2-dicarboxyethyl)-AMP + GDP + phosphate + 2 H(+). The protein operates within purine metabolism; AMP biosynthesis via de novo pathway; AMP from IMP: step 1/2. In terms of biological role, plays an important role in the de novo pathway of purine nucleotide biosynthesis. Catalyzes the first committed step in the biosynthesis of AMP from IMP. The chain is Adenylosuccinate synthetase from Anaeromyxobacter sp. (strain K).